The primary structure comprises 179 residues: Large ribosomal subunit protein uL5 (179 aa).

It belongs to the universal ribosomal protein uL5 family. As to quaternary structure, part of the 50S ribosomal subunit; part of the 5S rRNA/L5/L18/L25 subcomplex. Contacts the 5S rRNA and the P site tRNA. Forms a bridge to the 30S subunit in the 70S ribosome.

Its function is as follows. This is one of the proteins that bind and probably mediate the attachment of the 5S RNA into the large ribosomal subunit, where it forms part of the central protuberance. In the 70S ribosome it contacts protein S13 of the 30S subunit (bridge B1b), connecting the 2 subunits; this bridge is implicated in subunit movement. Contacts the P site tRNA; the 5S rRNA and some of its associated proteins might help stabilize positioning of ribosome-bound tRNAs. The chain is Large ribosomal subunit protein uL5 from Desulfatibacillum aliphaticivorans.